Consider the following 56-residue polypeptide: UPF0434 protein CbuK_1382 (56 aa).

It belongs to the UPF0434 family.

This is UPF0434 protein CbuK_1382 from Coxiella burnetii (strain CbuK_Q154) (Coxiella burnetii (strain Q154)).